Reading from the N-terminus, the 240-residue chain is Transmembrane emp24 domain-containing protein 6 (240 aa).

An N-terminal signal peptide occupies residues 1-21 (MSPLLFGAGLVVLNLVTSARS). Residues 22–200 (QKTEPLSGSG…FFLIQSNYNY (179 aa)) are Lumenal-facing. The region spanning 53-138 (TECFWQFAHQ…SVQVYLNFGV (86 aa)) is the GOLD domain. Residues Asn107 and Asn156 are each glycosylated (N-linked (GlcNAc...) asparagine). Residues 201 to 223 (VNWWSTAQSLVIILSGILQLYFL) traverse the membrane as a helical segment. Residues 224 to 240 (KRLFNVPTTTDTKKPRC) are Cytoplasmic-facing.

Belongs to the EMP24/GP25L family.

It is found in the endoplasmic reticulum membrane. The sequence is that of Transmembrane emp24 domain-containing protein 6 (TMED6) from Homo sapiens (Human).